The chain runs to 87 residues: Scorpine-like peptide Tco 41.46-2 (87 aa).

A signal peptide spans 1-19; that stretch reads MERKLALLLFLGMVTLASC. Residues 53–87 enclose the BetaSPN-type CS-alpha/beta domain; that stretch reads QFGCPAYEGYCNNHCQDIERKDGECHGFKCKCAKD. 3 disulfide bridges follow: Cys-56-Cys-77, Cys-63-Cys-82, and Cys-67-Cys-84.

It belongs to the long chain scorpion toxin family. Class 1 subfamily. Expressed by the venom gland.

Its subcellular location is the secreted. In terms of biological role, may have antibacterial activity. Functionally, inhibits voltage-gated potassium channel. Does not induce hemolytic activity, lactate dehydrogenase (LDH) release from mast cells, mast cell degranulation, and antimicrobial effects. In vivo, injection into mice causes moderate edema formation, but induces very weak or no change in nociceptive sensibility. It also reduces mice locomotion, suggesting an increase in anxiety, but causes no alteration in rearing (standing on hind limbs). This Tityus costatus (Brazilian scorpion) protein is Scorpine-like peptide Tco 41.46-2.